Consider the following 708-residue polypeptide: MSRIIMLIPLDKDIGLTSIGLSIIYFFYQKKIKKKSVQSILYFSCTQNSSNSTSHVINKYFSKIVHTVDYIDFSKVLFNSPEYSFLLNKVIDEHYNNKFLRELILIEGIKNNYCINSEEMNYDISQNLNAEVIFIANLENSSPEYIKNKEKKINFFLKQKKYKNILGVIFNQINSPFLENKYDFIKKLIVLKKIKNETKTIVPKKILKNNFFSIIACIPWNRNIVTTRVIDLFNFLNIQHTNLVQKKNHIIEEIIIFDTHHLNLLNKHSLNTLVIVSFSRVDVFLNVLNCNVNRSKVKCIILTGILKLKKNIASLYKFLIKRSISIFFTEKNTIEILSQLQNFNFDISVKDITYIKKLQRYISNFFCHSSFMFFKKKYNINVIYPPKEFCYNLKLLSQKKNKRIKLPESYEIRILKSVAICSDSNIAQCVLLGDPKKIYSIANDNGINLKKNIEIIDPISVRQEYLARFLEIRKGKNINEFSAKKQLEDNTVLATLILESNHVDGLVSGSINTTSDTIRPALQIIKTNPQSLLVSSIFFMLLPNQVLIYGDCAININPTAEELAVIAIQSADSAKMFGIEPRIAMLSYSTGCSGFGCQVEKVKEATSIIKNRRSDLIIDGPIQYDAAVSNKVAKLKAPSSPISGSANVFIFPDLNSGNIAYKAVQRSSRIVSIGPMLQGLRKPVNDLSRGASVEDIIYTIALTSIQSE.

A phosphate acetyltransferase region spans residues 388 to 708; the sequence is EFCYNLKLLS…TIALTSIQSE (321 aa).

It in the N-terminal section; belongs to the CobB/CobQ family. This sequence in the C-terminal section; belongs to the phosphate acetyltransferase and butyryltransferase family. In terms of assembly, homohexamer.

The protein localises to the cytoplasm. It carries out the reaction acetyl-CoA + phosphate = acetyl phosphate + CoA. It participates in metabolic intermediate biosynthesis; acetyl-CoA biosynthesis; acetyl-CoA from acetate: step 2/2. Functionally, involved in acetate metabolism. The sequence is that of Phosphate acetyltransferase (pta) from Buchnera aphidicola subsp. Acyrthosiphon pisum (strain APS) (Acyrthosiphon pisum symbiotic bacterium).